A 396-amino-acid polypeptide reads, in one-letter code: Elongation factor Tu (396 aa).

A tr-type G domain is found at 10–206 (KPHVNVGTIG…ALDSYIPTPE (197 aa)). The G1 stretch occupies residues 19-26 (GHVDHGKT). 19-26 (GHVDHGKT) is a binding site for GTP. A Mg(2+)-binding site is contributed by T26. Positions 60–64 (GITIN) are G2. Positions 81-84 (DCPG) are G3. GTP-binding positions include 81-85 (DCPGH) and 136-139 (NKCD). The interval 136–139 (NKCD) is G4. Residues 174 to 176 (SAL) are G5.

The protein belongs to the TRAFAC class translation factor GTPase superfamily. Classic translation factor GTPase family. EF-Tu/EF-1A subfamily. As to quaternary structure, monomer.

The protein localises to the cytoplasm. The enzyme catalyses GTP + H2O = GDP + phosphate + H(+). In terms of biological role, GTP hydrolase that promotes the GTP-dependent binding of aminoacyl-tRNA to the A-site of ribosomes during protein biosynthesis. The sequence is that of Elongation factor Tu from Aromatoleum aromaticum (strain DSM 19018 / LMG 30748 / EbN1) (Azoarcus sp. (strain EbN1)).